Reading from the N-terminus, the 104-residue chain is uncharacterized protein (104 aa).

2 helical membrane-spanning segments follow: residues Leu-45–Phe-65 and Leu-70–Leu-90.

Its subcellular location is the membrane. This is an uncharacterized protein from Saccharomyces cerevisiae (strain ATCC 204508 / S288c) (Baker's yeast).